We begin with the raw amino-acid sequence, 324 residues long: DNA primase small subunit PriS (324 aa).

Active-site residues include Asp-94, Asp-96, and Asp-274.

It belongs to the eukaryotic-type primase small subunit family. In terms of assembly, heterodimer of a small subunit (PriS) and a large subunit (PriL). Mg(2+) serves as cofactor. It depends on Mn(2+) as a cofactor.

In terms of biological role, catalytic subunit of DNA primase, an RNA polymerase that catalyzes the synthesis of short RNA molecules used as primers for DNA polymerase during DNA replication. The small subunit contains the primase catalytic core and has DNA synthesis activity on its own. Binding to the large subunit stabilizes and modulates the activity, increasing the rate of DNA synthesis while decreasing the length of the DNA fragments, and conferring RNA synthesis capability. The DNA polymerase activity may enable DNA primase to also catalyze primer extension after primer synthesis. May also play a role in DNA repair. The polypeptide is DNA primase small subunit PriS (Methanobrevibacter smithii (strain ATCC 35061 / DSM 861 / OCM 144 / PS)).